Consider the following 150-residue polypeptide: Cell division protein SepF (150 aa).

Belongs to the SepF family. As to quaternary structure, homodimer. Interacts with FtsZ.

The protein localises to the cytoplasm. Functionally, cell division protein that is part of the divisome complex and is recruited early to the Z-ring. Probably stimulates Z-ring formation, perhaps through the cross-linking of FtsZ protofilaments. Its function overlaps with FtsA. The chain is Cell division protein SepF from Clostridium botulinum (strain Kyoto / Type A2).